A 395-amino-acid chain; its full sequence is Phosphopentomutase (395 aa).

Asp14, Asp286, His291, Asp327, His328, and His339 together coordinate Mn(2+).

This sequence belongs to the phosphopentomutase family. Mn(2+) is required as a cofactor.

It is found in the cytoplasm. The catalysed reaction is 2-deoxy-alpha-D-ribose 1-phosphate = 2-deoxy-D-ribose 5-phosphate. It carries out the reaction alpha-D-ribose 1-phosphate = D-ribose 5-phosphate. The protein operates within carbohydrate degradation; 2-deoxy-D-ribose 1-phosphate degradation; D-glyceraldehyde 3-phosphate and acetaldehyde from 2-deoxy-alpha-D-ribose 1-phosphate: step 1/2. Its function is as follows. Isomerase that catalyzes the conversion of deoxy-ribose 1-phosphate (dRib-1-P) and ribose 1-phosphate (Rib-1-P) to deoxy-ribose 5-phosphate (dRib-5-P) and ribose 5-phosphate (Rib-5-P), respectively. In Staphylococcus saprophyticus subsp. saprophyticus (strain ATCC 15305 / DSM 20229 / NCIMB 8711 / NCTC 7292 / S-41), this protein is Phosphopentomutase.